The following is a 671-amino-acid chain: Major S-layer protein (671 aa).

A signal peptide spans 1-24; sequence MKRFAALSLAALMLLTVFASAASA. N36, N70, N116, and N350 each carry an N-linked (GlcNAc...) asparagine glycan. A disordered region spans residues 594–650; the sequence is GEEVSGEEETPEETPTGEVTETEGEEETPTEVTETPTEGEPAPEETETTESEGTTPG. Positions 613 to 622 are enriched in acidic residues; the sequence is TETEGEEETP. The span at 623-633 shows a compositional bias: low complexity; sequence TEVTETPTEGE. The span at 634–643 shows a compositional bias: acidic residues; it reads PAPEETETTE. The chain crosses the membrane as a helical span at residues 647 to 667; sequence TTPGFGFMFGLVGLLAVVYLV.

Belongs to the Methanosarcinales S-layer protein family. Post-translationally, glycosylated.

Its subcellular location is the secreted. The protein resides in the cell wall. It localises to the S-layer. The protein localises to the cell membrane. Its function is as follows. S-layer protein. The S-layer is a paracrystalline mono-layered assembly of proteins which coat the surface of the cell. The protein is Major S-layer protein of Methanosarcina acetivorans (strain ATCC 35395 / DSM 2834 / JCM 12185 / C2A).